A 517-amino-acid chain; its full sequence is FERM domain-containing protein 5 (517 aa).

Residues 17–298 (YSCTVRLLDD…ENQAFYKLEK (282 aa)) form the FERM domain. The interaction with ROCK1 stretch occupies residues 308-353 (SNLFFKGSRFRYSGRVAKEVMESSAKIKREPPEIHRAGMVPSRSCP). The tract at residues 344–367 (AGMVPSRSCPSITHGPRLSSVPRT) is disordered. Phosphoserine is present on Ser-375. 2 disordered regions span residues 385–408 (DSAH…VRSS) and 485–517 (GHGG…VPLD). Residues 388-398 (HSTPVRSSSHG) are compositionally biased toward polar residues. A compositionally biased stretch (low complexity) spans 498–517 (KGPQLQQQQWKGWGKSVPLD).

In terms of assembly, interacts with CTNND1, ITGB5 (via cytoplasmic domain) and ROCK1.

The protein localises to the cell junction. The protein resides in the adherens junction. In terms of biological role, may be involved in regulation of cell migration. May regulate cell-matrix interactions via its interaction with ITGB5 and modifying ITGB5 cytoplasmic tail interactions such as with FERMT2 and TLN1. May regulate ROCK1 kinase activity possibly involved in regulation of actin stress fiber formation. The sequence is that of FERM domain-containing protein 5 (Frmd5) from Mus musculus (Mouse).